A 714-amino-acid chain; its full sequence is MLFTLSILSTLLFSTSISAIEITQNRVDHGTITTSIGDITIDSGAYWSIIDNSISTFIGNLDIKSNAGLYISSTISNLPLLVLLNSGSASITNDGIVSLDARTSTQGSSQFNLVGGSFENNGEFYLAASGAIPMTMGLTGKSWNNNGLIVAYQNERSSGSVKFGVIGQTITNKGQICLTNQVYQQTSKIDGSGCVTAKKNASIYISNVLDPQSVSTEQNYFLADDKSSIITQAVGFNTQVINVFGFGNGNKIGLTLPLKSGNGGQAYSYDSDSGVLSLSSGLFGQKFNIGPGYDSKLFSIVTDNSEGIPSVNNGAVSYSGPVPSQKSLPSACNVECKPVPNAPDDGSSSSSSVVSSTTSTASTDSASLSSTSGEESSASTTTTESSETSNTSSNASETNGSSTESETTGSATTSEASETINSSESSETSGASETSQSTGTSESSETESSVTESSETDSITATTSDTTSSGNDNSSVTSSSDASTDSITSETASSSSTPLSGDSSQVSSLTTGTSPDTIASFQTDSTSFGFGSGSPSSGAVQSSGVTNSTPNTGDVNTQSNTANIATSDNTATSTASNDTGVNTATATTTGTGTGPDNNNNNNNNNNNNNNNNNNNNNNNNNNTNNSGVSAADSKASGDISTVTASSTTLISVASVSSTYPIANESSSPSSSSSSSSSSSGTPGEVIPNANGSSKLSIGMTFMISGFATMFALFM.

A signal peptide spans 1-19 (MLFTLSILSTLLFSTSISA). The N-linked (GlcNAc...) asparagine glycan is linked to N200. A compositionally biased stretch (polar residues) spans 320–330 (GPVPSQKSLPS). Disordered stretches follow at residues 320–633 (GPVP…AADS) and 660–692 (PIAN…ANGS). Positions 346–504 (GSSSSSSVVS…SSTPLSGDSS (159 aa)) are enriched in low complexity. N-linked (GlcNAc...) asparagine glycans are attached at residues N390, N394, N399, N421, and N473. Residues 505-519 (QVSSLTTGTSPDTIA) show a composition bias toward polar residues. Residues 520-544 (SFQTDSTSFGFGSGSPSSGAVQSSG) show a composition bias toward low complexity. The span at 545–558 (VTNSTPNTGDVNTQ) shows a compositional bias: polar residues. Low complexity-rich tracts occupy residues 559-590 (SNTA…TTTG) and 597-625 (NNNN…NTNN). N577, N621, N624, and N663 each carry an N-linked (GlcNAc...) asparagine glycan. A compositionally biased stretch (low complexity) spans 665–679 (SSSPSSSSSSSSSSS). A glycan (N-linked (GlcNAc...) asparagine) is linked at N690. N690 carries the GPI-anchor amidated asparagine lipid modification. A propeptide spans 691–714 (GSSKLSIGMTFMISGFATMFALFM) (removed in mature form).

The protein belongs to the HYR1/IFF family. Post-translationally, the GPI-anchor is attached to the protein in the endoplasmic reticulum and serves to target the protein to the cell surface. There, the glucosamine-inositol phospholipid moiety is cleaved off and the GPI-modified mannoprotein is covalently attached via its lipidless GPI glycan remnant to the 1,6-beta-glucan of the outer cell wall layer.

The protein localises to the secreted. The protein resides in the cell wall. It localises to the membrane. Its function is as follows. GPI-anchored cell wall protein involved in cell wall organization, hyphal growth, as well as in host-fungal interaction and virulence. This Candida albicans (strain SC5314 / ATCC MYA-2876) (Yeast) protein is Cell wall protein IFF7 (IFF8).